Here is a 1032-residue protein sequence, read N- to C-terminus: MPSAVGESKNFPNGSPLNKGVRAMKGWVKGAIVLAIALVGLEVIARIYVENLWFQELSFQSVFWKRVRWQGSIALITGFISWGFIVFQVKVTNRLIQEEAQLKGLAVAQAVYAPVPVAIGSRYLPMPAPPVGPKAHSRPLQLPVLLPLIIVLQLILISLVMYYVFITIQVWTPDYTLPNITPAVPQPFRLHFLFTSFSGMGSQLGVTALAGMLALIGVLRGPRLLPGLVFILSAVWGLLLSGNWFRLLLSVNSQPFNTIDPQFHHDISFYIFQIPLWQLLESWWRGLFLFSLLGVTLIILKSADSLSEGRFPGFSAAQLRHISALGAAVALTLGVEHWLKRYDYLFANHGVVYGANYTDIHWRLPVETGLAIFSMAIAIWLGWLSVKGWPRAKGTGAPQRRGQLPIIGLWLPVAVYLLILLLQNLGGWAIELLVVQPNQLTRERPYLARNIAATREAFNLQIIQPATLTGRGQLTPASLERNRLTLNNIRLWDPIPLLKTNRQLQQIRLYYKFSDADLDRYTIRVQKDDTQTISTAKQQTLIAPRELDYTAVPEKAQTWVNKHLVYTHGYGFTLSPVNLVDQGGLPYYFVKDIGTDENAGALRTSSELIRTSIPIGKPRIYFGEITDNYIMTNTAIPELDFPSGEANVYNFYDGRGGIFLNSPIRKLLFAVYLRDWQMLFTENFKPDTRVLFRRNINHRIRHIAPFLRFDRDPYLVTAKVKGEEHSTLYWLIDAYTTSNSYPYSDPGEGDANQPGRNFNYIRNSVKILVDAYNGDVRFFTIDKQDPLINAWQKIFPELFLPFSSMPSTLKSHIRYPVDMFSTQSERLLTYHMEDIDVFYNREDQWRIPQETYADEQQPIAPYYLIMKLAGIDAKEEEFVLSQVYTPNARNNLIALLFARCDEQNYGKLLLYTLPKERLVYGPEQIEALVNQDPVISERISLWNRRGSRAIQGNLLVIPIEESLLYVEPIYLEAEKNSLPTLARVVVVYGNQIAMAESLNEAIEAIFDPNPTGRNAIVRPLDDTVNDLNSELN.

Helical transmembrane passes span 27–49 (WVKGAIVLAIALVGLEVIARIYV), 69–87 (WQGSIALITGFISWGFIVF), 144–166 (VLLPLIIVLQLILISLVMYYVFI), 197–219 (FSGMGSQLGVTALAGMLALIGVL), 226–248 (PGLVFILSAVWGLLLSGNWFRLL), 283–300 (WWRGLFLFSLLGVTLIIL), 321–339 (HISALGAAVALTLGVEHWL), 364–386 (LPVETGLAIFSMAIAIWLGWLSV), and 406–428 (IIGLWLPVAVYLLILLLQNLGGW).

This sequence belongs to the UPF0182 family.

It localises to the cell membrane. The protein is UPF0182 protein sll1060 of Synechocystis sp. (strain ATCC 27184 / PCC 6803 / Kazusa).